A 176-amino-acid polypeptide reads, in one-letter code: MNKDDDKEGLAMFSALIDGIKPITQDKRHFRTPLKTKQEIALKEQQLHANSYFSDTYQPLLPIQGPMRWLDDGVDSLELKRLRRGDYQPDLLLDLHGYRQSEAKLELAALIQACVKQQSQCCCVMHGYGSGILKQQVPMWLVQHPMVKAFHQAPKEWGGDAALLVLIDLGELPHRR.

The 76-residue stretch at 93-168 (LDLHGYRQSE…GDAALLVLID (76 aa)) folds into the Smr domain.

It belongs to the SmrB family. In terms of assembly, associates with collided ribosomes, but not with correctly translating polysomes.

In terms of biological role, acts as a ribosome collision sensor. Detects stalled/collided disomes (pairs of ribosomes where the leading ribosome is stalled and a second ribosome has collided with it) and endonucleolytically cleaves mRNA at the 5' boundary of the stalled ribosome. Stalled/collided disomes form a new interface (primarily via the 30S subunits) that binds SmrB. Cleaved mRNA becomes available for tmRNA ligation, leading to ribosomal subunit dissociation and rescue of stalled ribosomes. The protein is Ribosome rescue factor SmrB of Shewanella sp. (strain W3-18-1).